Reading from the N-terminus, the 118-residue chain is Small ribosomal subunit protein uS13 (118 aa).

Positions 93–118 (RGLPVRGQRTKTNARTRKGPRKPIRK) are disordered.

Belongs to the universal ribosomal protein uS13 family. Part of the 30S ribosomal subunit. Forms a loose heterodimer with protein S19. Forms two bridges to the 50S subunit in the 70S ribosome.

Its function is as follows. Located at the top of the head of the 30S subunit, it contacts several helices of the 16S rRNA. In the 70S ribosome it contacts the 23S rRNA (bridge B1a) and protein L5 of the 50S subunit (bridge B1b), connecting the 2 subunits; these bridges are implicated in subunit movement. Contacts the tRNAs in the A and P-sites. This is Small ribosomal subunit protein uS13 from Pseudomonas syringae pv. tomato (strain ATCC BAA-871 / DC3000).